The primary structure comprises 504 residues: Aspartyl/glutamyl-tRNA(Asn/Gln) amidotransferase subunit B (504 aa).

Belongs to the GatB/GatE family. GatB subfamily. Heterotrimer of A, B and C subunits.

The catalysed reaction is L-glutamyl-tRNA(Gln) + L-glutamine + ATP + H2O = L-glutaminyl-tRNA(Gln) + L-glutamate + ADP + phosphate + H(+). It catalyses the reaction L-aspartyl-tRNA(Asn) + L-glutamine + ATP + H2O = L-asparaginyl-tRNA(Asn) + L-glutamate + ADP + phosphate + 2 H(+). Its function is as follows. Allows the formation of correctly charged Asn-tRNA(Asn) or Gln-tRNA(Gln) through the transamidation of misacylated Asp-tRNA(Asn) or Glu-tRNA(Gln) in organisms which lack either or both of asparaginyl-tRNA or glutaminyl-tRNA synthetases. The reaction takes place in the presence of glutamine and ATP through an activated phospho-Asp-tRNA(Asn) or phospho-Glu-tRNA(Gln). This chain is Aspartyl/glutamyl-tRNA(Asn/Gln) amidotransferase subunit B, found in Rhodococcus opacus (strain B4).